A 976-amino-acid chain; its full sequence is R3H domain-containing protein 2 (976 aa).

2 disordered regions span residues 32 to 71 (ISKT…AKSN) and 105 to 147 (ISCP…QEYT). A compositionally biased stretch (basic and acidic residues) spans 36-56 (PSKEEIEKECEDTSLRQETQR). Residue Ser37 is modified to Phosphoserine. A compositionally biased stretch (basic residues) spans 58 to 71 (TSNHGHARKRAKSN). The segment covering 109 to 143 (SDKEEEKSTKDVSEKEDKDKNKEKIPRKMLSRDSS) has biased composition (basic and acidic residues). At Ser143 the chain carries Phosphoserine. One can recognise an R3H domain in the interval 169–232 (RMMLLKLEQE…AVIINKTSNT (64 aa)). Positions 233 to 310 (RIPEQRFSEH…NREGLSRTSS (78 aa)) constitute an SUZ domain. Basic and acidic residues predominate over residues 257–269 (LKRDDASMDRDDN). Disordered stretches follow at residues 257–376 (LKRD…ISRP), 401–457 (CTAQ…EAAD), 480–560 (ASTG…PGLQ), 661–725 (GTSP…PSMV), and 738–780 (RGQK…SLSS). Residues 306–317 (SRTSSSRQSSTD) show a composition bias toward low complexity. Ser330, Ser333, and Ser349 each carry phosphoserine. Over residues 401 to 415 (CTAQQQQQQQQQQLP) the composition is skewed to low complexity. Composition is skewed to polar residues over residues 441–453 (PFGQ…QGST) and 480–504 (ASTG…QQVL). Positions 543 to 560 (SPQRGQQLPQPSQQPGLQ) are enriched in low complexity. The span at 682-691 (SPSPCSPPQM) shows a compositional bias: pro residues. The span at 692-714 (PQQYSGVSPSGPGVVVMQLNVPN) shows a compositional bias: low complexity. The span at 748–758 (PDSSPQANTQM) shows a compositional bias: polar residues. Residues 759–777 (SSSPVTSPTQSPAPSPVTS) are compositionally biased toward low complexity. A phosphoserine mark is found at Ser853 and Ser855. Phosphothreonine is present on residues Thr856 and Thr860.

It localises to the nucleus. The polypeptide is R3H domain-containing protein 2 (R3HDM2) (Homo sapiens (Human)).